We begin with the raw amino-acid sequence, 845 residues long: Protein P (845 aa).

The tract at residues 1–179 (MPLSYQHFRK…FCGSPYSWEQ (179 aa)) is terminal protein domain (TP). Residues 180-348 (ELQHGRLVIK…YCLSHLVNLR (169 aa)) form a spacer region. Residues 226–252 (GLQPRQGRLASSQPSRSGSIRAKAHPS) form a disordered region. Residues 234–243 (LASSQPSRSG) show a composition bias toward polar residues. Positions 349–692 (EDWGPCDEHG…YMNLYPVARQ (344 aa)) are polymerase/reverse transcriptase domain (RT). A Reverse transcriptase domain is found at 359–602 (EHHIRIPRTP…YSLNFMGYII (244 aa)). Mg(2+)-binding residues include D431, D553, and D554. A rnaseH domain (RH) region spans residues 693-845 (RPGLCQVFAD…SPLHVAWRPP (153 aa)).

It belongs to the hepadnaviridae P protein family.

The catalysed reaction is DNA(n) + a 2'-deoxyribonucleoside 5'-triphosphate = DNA(n+1) + diphosphate. The enzyme catalyses Endonucleolytic cleavage to 5'-phosphomonoester.. Activated by host HSP70 and HSP40 in vitro to be able to bind the epsilon loop of the pgRNA. Because deletion of the RNase H region renders the protein partly chaperone-independent, the chaperones may be needed indirectly to relieve occlusion of the RNA-binding site by this domain. Inhibited by several reverse-transcriptase inhibitors: Lamivudine, Adefovir and Entecavir. Multifunctional enzyme that converts the viral RNA genome into dsDNA in viral cytoplasmic capsids. This enzyme displays a DNA polymerase activity that can copy either DNA or RNA templates, and a ribonuclease H (RNase H) activity that cleaves the RNA strand of RNA-DNA heteroduplexes in a partially processive 3'- to 5'-endonucleasic mode. Neo-synthesized pregenomic RNA (pgRNA) are encapsidated together with the P protein, and reverse-transcribed inside the nucleocapsid. Initiation of reverse-transcription occurs first by binding the epsilon loop on the pgRNA genome, and is initiated by protein priming, thereby the 5'-end of (-)DNA is covalently linked to P protein. Partial (+)DNA is synthesized from the (-)DNA template and generates the relaxed circular DNA (RC-DNA) genome. After budding and infection, the RC-DNA migrates in the nucleus, and is converted into a plasmid-like covalently closed circular DNA (cccDNA). The activity of P protein does not seem to be necessary for cccDNA generation, and is presumably released from (+)DNA by host nuclear DNA repair machinery. The polypeptide is Protein P (Homo sapiens (Human)).